The sequence spans 166 residues: SsrA-binding protein (166 aa).

Belongs to the SmpB family.

Its subcellular location is the cytoplasm. Its function is as follows. Required for rescue of stalled ribosomes mediated by trans-translation. Binds to transfer-messenger RNA (tmRNA), required for stable association of tmRNA with ribosomes. tmRNA and SmpB together mimic tRNA shape, replacing the anticodon stem-loop with SmpB. tmRNA is encoded by the ssrA gene; the 2 termini fold to resemble tRNA(Ala) and it encodes a 'tag peptide', a short internal open reading frame. During trans-translation Ala-aminoacylated tmRNA acts like a tRNA, entering the A-site of stalled ribosomes, displacing the stalled mRNA. The ribosome then switches to translate the ORF on the tmRNA; the nascent peptide is terminated with the 'tag peptide' encoded by the tmRNA and targeted for degradation. The ribosome is freed to recommence translation, which seems to be the essential function of trans-translation. The protein is SsrA-binding protein of Parasynechococcus marenigrum (strain WH8102).